The following is a 369-amino-acid chain: Histidinol-phosphate aminotransferase 2 (369 aa).

Lysine 231 is subject to N6-(pyridoxal phosphate)lysine.

Belongs to the class-II pyridoxal-phosphate-dependent aminotransferase family. Histidinol-phosphate aminotransferase subfamily. As to quaternary structure, homodimer. Pyridoxal 5'-phosphate is required as a cofactor.

It carries out the reaction L-histidinol phosphate + 2-oxoglutarate = 3-(imidazol-4-yl)-2-oxopropyl phosphate + L-glutamate. Its pathway is amino-acid biosynthesis; L-histidine biosynthesis; L-histidine from 5-phospho-alpha-D-ribose 1-diphosphate: step 7/9. This Legionella pneumophila (strain Paris) protein is Histidinol-phosphate aminotransferase 2.